The following is a 190-amino-acid chain: Transcription factor bHLH162 (190 aa).

A compositionally biased stretch (polar residues) spans 1 to 12; sequence MEPSHSNTGQSR. A disordered region spans residues 1–21; that stretch reads MEPSHSNTGQSRSVDRKTVEK. In terms of domain architecture, bHLH spans 11 to 63; the sequence is SRSVDRKTVEKNRRMQMKSLYSELISLLPHHSSTEPLTLPDQLDEAANYIKKL.

The protein belongs to the bHLH protein family.

It is found in the nucleus. The chain is Transcription factor bHLH162 from Arabidopsis thaliana (Mouse-ear cress).